The chain runs to 144 residues: Superoxide dismutase [Mn], mitochondrial (144 aa).

Residues histidine 10, histidine 58, and aspartate 143 each contribute to the Mn(2+) site.

This sequence belongs to the iron/manganese superoxide dismutase family. Homotetramer. It depends on Mn(2+) as a cofactor.

It localises to the mitochondrion matrix. The catalysed reaction is 2 superoxide + 2 H(+) = H2O2 + O2. Its function is as follows. Destroys superoxide anion radicals which are normally produced within the cells and which are toxic to biological systems. The protein is Superoxide dismutase [Mn], mitochondrial of Eptatretus stoutii (Pacific hagfish).